Consider the following 395-residue polypeptide: Flap endonuclease 1 (395 aa).

The N-domain stretch occupies residues 1-104 (MGIKHLYQII…GELAKRFMRK (104 aa)). Asp34 contacts Mg(2+). The DNA site is built by Arg47 and Arg70. Mg(2+) is bound by residues Asp86, Glu158, Glu160, Asp179, and Asp181. The interval 122–253 (EVEKFSRRTV…NTALKLIRDH (132 aa)) is I-domain. Glu158 is a binding site for DNA. Residues Gly231 and Asp233 each coordinate DNA. Asp233 is a Mg(2+) binding site. An interaction with PCNA region spans residues 341-349 (QQSRLEGFF). Residues 360-389 (AVLKRKHEEKLELQKKKKKEDAKAKKEAKS) are compositionally biased toward basic and acidic residues. Residues 360-395 (AVLKRKHEEKLELQKKKKKEDAKAKKEAKSKPRGTT) form a disordered region.

It belongs to the XPG/RAD2 endonuclease family. FEN1 subfamily. Interacts with PCNA. Three molecules of FEN1 bind to one PCNA trimer with each molecule binding to one PCNA monomer. PCNA stimulates the nuclease activity without altering cleavage specificity. The cofactor is Mg(2+). Phosphorylated. Phosphorylation upon DNA damage induces relocalization to the nuclear plasma.

It localises to the nucleus. Its subcellular location is the nucleolus. It is found in the nucleoplasm. The protein localises to the mitochondrion. Structure-specific nuclease with 5'-flap endonuclease and 5'-3' exonuclease activities involved in DNA replication and repair. During DNA replication, cleaves the 5'-overhanging flap structure that is generated by displacement synthesis when DNA polymerase encounters the 5'-end of a downstream Okazaki fragment. It enters the flap from the 5'-end and then tracks to cleave the flap base, leaving a nick for ligation. Also involved in the long patch base excision repair (LP-BER) pathway, by cleaving within the apurinic/apyrimidinic (AP) site-terminated flap. Acts as a genome stabilization factor that prevents flaps from equilibrating into structures that lead to duplications and deletions. Also possesses 5'-3' exonuclease activity on nicked or gapped double-stranded DNA, and exhibits RNase H activity. Also involved in replication and repair of rDNA and in repairing mitochondrial DNA. This chain is Flap endonuclease 1, found in Ajellomyces capsulatus (strain NAm1 / WU24) (Darling's disease fungus).